The chain runs to 370 residues: Cyanuric acid amidohydrolase (370 aa).

The interval 1–106 (MRTTSVGVFK…TVFTRREVER (106 aa)) is RU A. Residues R54 and 85–86 (SG) contribute to the substrate site. An RU B region spans residues 115 to 251 (RLSIGMAHTR…NVVIVLGNSA (137 aa)). K165 is an active-site residue. Residues R197 and 234-235 (SA) each bind substrate. S234 acts as the Nucleophile in catalysis. The interval 257-370 (FEIGHAVMND…PVAVIARLSD (114 aa)) is RU C. Mg(2+) is bound at residue E302. Substrate contacts are provided by residues R329 and 348-349 (SG). Mg(2+) is bound by residues A351, Q354, G355, P356, and G359.

It belongs to the cyclic amide hydrolase (CyAH) family. In terms of assembly, homotetramer.

It catalyses the reaction cyanurate + H2O = 1-carboxybiuret + H(+). Its pathway is xenobiotic degradation; atrazine degradation; biuret from cyanurate: step 1/1. Its activity is regulated as follows. Inhibited by barbituric acid. In terms of biological role, responsible for the hydrolysis of cyanuric acid, an intermediate formed during catabolism of s-triazine based compounds in herbicides such as atrazine and polymers such as melamine. Catalyzes the hydrolytic opening of the s-triazine ring of cyanuric acid (2,4,6-trihydroxy-s-triazine) to yield carbon dioxide and carboxybiuret, which spontaneously decarboxylates to biuret. This chain is Cyanuric acid amidohydrolase, found in Bradyrhizobium diazoefficiens (strain JCM 10833 / BCRC 13528 / IAM 13628 / NBRC 14792 / USDA 110).